The following is a 410-amino-acid chain: MSASQTSDVPTLLVKIFGKDRPGITAGLFDTLAAYSVDVVDIEQVVTRGRIVLCALVTEPPRGLEGDLRATVHSWAESLKLQAEIISGIGDNRPRGFGRSLVTVLGHPLTAEATAAIAARITESGSNIDRIFRLAKYPVTAVEFAVSGVETEPLRTALATEAAALGVDIAVVAAGLHRRAQRLVVMDVDSTLIQDEVIELFAAHAGCEDEVAEVTAAAMRGELDFEQSLHARVALLAGLDASVVDKVRAEVRLTPGARTLIRTLKRLGYQVGVVSGGFTQVTDALQEQLGLDFAQANTLEIVDGRLTGRVTGEIVDRAGKARLLRRFAAAAGVPLSQTVAIGDGANDLDMLNAAGLGVAFNAKPVVREAAHTAVNVPFLDTVLYLLGITREEVEAADTLADDLGDGPGRP.

Residues 13 to 91 form the ACT domain; sequence LVKIFGKDRP…QAEIISGIGD (79 aa). Aspartate 187 functions as the Nucleophile in the catalytic mechanism. Residues aspartate 187 and aspartate 189 each contribute to the Mg(2+) site. Residue aspartate 189 is the Proton donor of the active site. Substrate is bound by residues glutamate 196, arginine 232, 275 to 276, and lysine 320; that span reads SG. Aspartate 343 is a binding site for Mg(2+). Asparagine 346 is a binding site for substrate.

Belongs to the HAD-like hydrolase superfamily. SerB family. Mg(2+) is required as a cofactor.

The enzyme catalyses O-phospho-L-serine + H2O = L-serine + phosphate. It carries out the reaction O-phospho-D-serine + H2O = D-serine + phosphate. It functions in the pathway amino-acid biosynthesis; L-serine biosynthesis; L-serine from 3-phospho-D-glycerate: step 3/3. Its function is as follows. Catalyzes the dephosphorylation of phosphoserine (P-Ser) in vitro. Also catalyzes the dephosphorylation of phosphothreonine (P-Thr) in vitro. This Streptomyces coelicolor (strain ATCC BAA-471 / A3(2) / M145) protein is Phosphoserine phosphatase.